The sequence spans 304 residues: UTP--glucose-1-phosphate uridylyltransferase 1 (304 aa).

The protein belongs to the UDPGP type 2 family.

The enzyme catalyses alpha-D-glucose 1-phosphate + UTP + H(+) = UDP-alpha-D-glucose + diphosphate. Its pathway is carbohydrate metabolism; nucleotide-sugar metabolism. This Streptococcus pyogenes serotype M3 (strain ATCC BAA-595 / MGAS315) protein is UTP--glucose-1-phosphate uridylyltransferase 1 (hasC1).